The sequence spans 342 residues: UDP-3-O-acylglucosamine N-acyltransferase (342 aa).

Histidine 234 functions as the Proton acceptor in the catalytic mechanism.

This sequence belongs to the transferase hexapeptide repeat family. LpxD subfamily. Homotrimer.

It carries out the reaction a UDP-3-O-[(3R)-3-hydroxyacyl]-alpha-D-glucosamine + a (3R)-hydroxyacyl-[ACP] = a UDP-2-N,3-O-bis[(3R)-3-hydroxyacyl]-alpha-D-glucosamine + holo-[ACP] + H(+). It functions in the pathway bacterial outer membrane biogenesis; LPS lipid A biosynthesis. In terms of biological role, catalyzes the N-acylation of UDP-3-O-acylglucosamine using 3-hydroxyacyl-ACP as the acyl donor. Is involved in the biosynthesis of lipid A, a phosphorylated glycolipid that anchors the lipopolysaccharide to the outer membrane of the cell. This Oleidesulfovibrio alaskensis (strain ATCC BAA-1058 / DSM 17464 / G20) (Desulfovibrio alaskensis) protein is UDP-3-O-acylglucosamine N-acyltransferase.